A 228-amino-acid polypeptide reads, in one-letter code: Cytidylate kinase (228 aa).

17–25 (GPSASGKGT) lines the ATP pocket.

This sequence belongs to the cytidylate kinase family. Type 1 subfamily.

Its subcellular location is the cytoplasm. The catalysed reaction is CMP + ATP = CDP + ADP. The enzyme catalyses dCMP + ATP = dCDP + ADP. The chain is Cytidylate kinase from Paraburkholderia xenovorans (strain LB400).